The following is a 185-amino-acid chain: Lysozyme g (185 aa).

Intrachain disulfides connect C4–C60 and C18–C29. Residue E73 is part of the active site.

Belongs to the glycosyl hydrolase 23 family.

It localises to the secreted. The enzyme catalyses Hydrolysis of (1-&gt;4)-beta-linkages between N-acetylmuramic acid and N-acetyl-D-glucosamine residues in a peptidoglycan and between N-acetyl-D-glucosamine residues in chitodextrins.. The chain is Lysozyme g from Cygnus atratus (Black swan).